The primary structure comprises 406 residues: Peptide chain release factor PrfB3, chloroplastic (406 aa).

Belongs to the prokaryotic/mitochondrial release factor family. As to quaternary structure, interacts with PDE338.

It localises to the plastid. Its subcellular location is the chloroplast stroma. It is found in the chloroplast. In terms of biological role, involved in the light- and stress-dependent regulation of stability of 3' processed petB transcripts, thus regulating cytochrome b6 accumulation, a rate-limiting step in photosynthetic electron transport. May be recruited to specifically protect petB transcripts against 3'-5' exonucleolytic attack by masking the 3' ends. Does not function as release factor. The sequence is that of Peptide chain release factor PrfB3, chloroplastic from Arabidopsis thaliana (Mouse-ear cress).